The following is a 205-amino-acid chain: Recombination protein RecR (205 aa).

Residues 64–79 form a C4-type zinc finger; it reads CSRCYFITQGDLCAIC. Positions 87–182 constitute a Toprim domain; it reads RVICVVEEPL…RVTRLARGLP (96 aa).

This sequence belongs to the RecR family.

Its function is as follows. May play a role in DNA repair. It seems to be involved in an RecBC-independent recombinational process of DNA repair. It may act with RecF and RecO. In Roseiflexus sp. (strain RS-1), this protein is Recombination protein RecR.